The primary structure comprises 540 residues: Acetyl-coenzyme A carboxylase carboxyl transferase subunit beta, chloroplastic (540 aa).

Residues 229–249 (YSDNGSSSIRTRTSTSSGSSY) form a disordered region. The span at 233–248 (GSSSIRTRTSTSSGSS) shows a compositional bias: low complexity. The 272-residue stretch at 267–538 (LWVQCENCYA…TFHPLKSNKV (272 aa)) folds into the CoA carboxyltransferase N-terminal domain. Residues Cys-271, Cys-274, Cys-290, and Cys-293 each coordinate Zn(2+). Residues 271-293 (CENCYALNYNKLFRSKMNVCEQC) form a C4-type zinc finger.

It belongs to the AccD/PCCB family. Acetyl-CoA carboxylase is a heterohexamer composed of biotin carboxyl carrier protein, biotin carboxylase and 2 subunits each of ACCase subunit alpha and ACCase plastid-coded subunit beta (accD). Zn(2+) is required as a cofactor.

It localises to the plastid. Its subcellular location is the chloroplast stroma. The enzyme catalyses N(6)-carboxybiotinyl-L-lysyl-[protein] + acetyl-CoA = N(6)-biotinyl-L-lysyl-[protein] + malonyl-CoA. It participates in lipid metabolism; malonyl-CoA biosynthesis; malonyl-CoA from acetyl-CoA: step 1/1. Component of the acetyl coenzyme A carboxylase (ACC) complex. Biotin carboxylase (BC) catalyzes the carboxylation of biotin on its carrier protein (BCCP) and then the CO(2) group is transferred by the transcarboxylase to acetyl-CoA to form malonyl-CoA. The protein is Acetyl-coenzyme A carboxylase carboxyl transferase subunit beta, chloroplastic of Amborella trichopoda.